We begin with the raw amino-acid sequence, 103 residues long: Large ribosomal subunit protein bL21 (103 aa).

It belongs to the bacterial ribosomal protein bL21 family. Part of the 50S ribosomal subunit. Contacts protein L20.

This protein binds to 23S rRNA in the presence of protein L20. The chain is Large ribosomal subunit protein bL21 from Chloroflexus aggregans (strain MD-66 / DSM 9485).